The sequence spans 368 residues: tRNA-specific 2-thiouridylase MnmA (368 aa).

Residues 23–30 and L49 each bind ATP; that span reads ALSGGVDS. C110 acts as the Nucleophile in catalysis. A disulfide bridge links C110 with C209. G135 lines the ATP pocket. The segment at 159 to 161 is interaction with tRNA; it reads KDQ. C209 functions as the Cysteine persulfide intermediate in the catalytic mechanism. Positions 314–315 are interaction with tRNA; that stretch reads RY.

It belongs to the MnmA/TRMU family.

It localises to the cytoplasm. It carries out the reaction S-sulfanyl-L-cysteinyl-[protein] + uridine(34) in tRNA + AH2 + ATP = 2-thiouridine(34) in tRNA + L-cysteinyl-[protein] + A + AMP + diphosphate + H(+). In terms of biological role, catalyzes the 2-thiolation of uridine at the wobble position (U34) of tRNA, leading to the formation of s(2)U34. This chain is tRNA-specific 2-thiouridylase MnmA, found in Synechococcus sp. (strain JA-2-3B'a(2-13)) (Cyanobacteria bacterium Yellowstone B-Prime).